Consider the following 332-residue polypeptide: DNA-directed RNA polymerase subunit alpha (332 aa).

Residues 1 to 234 are alpha N-terminal domain (alpha-NTD); it reads MTVTANQVLR…DQLSVFGDFT (234 aa). An alpha C-terminal domain (alpha-CTD) region spans residues 248–332; the sequence is VDPVLLRPID…AGVASHGMLG (85 aa).

It belongs to the RNA polymerase alpha chain family. As to quaternary structure, homodimer. The RNAP catalytic core consists of 2 alpha, 1 beta, 1 beta' and 1 omega subunit. When a sigma factor is associated with the core the holoenzyme is formed, which can initiate transcription.

The enzyme catalyses RNA(n) + a ribonucleoside 5'-triphosphate = RNA(n+1) + diphosphate. Its function is as follows. DNA-dependent RNA polymerase catalyzes the transcription of DNA into RNA using the four ribonucleoside triphosphates as substrates. The polypeptide is DNA-directed RNA polymerase subunit alpha (Stenotrophomonas maltophilia (strain R551-3)).